A 238-amino-acid chain; its full sequence is Small ribosomal subunit protein uS3 (238 aa).

The 70-residue stretch at 39 to 108 folds into the KH type-2 domain; that stretch reads IRKFVKKKLF…NVAVNVIEVK (70 aa).

This sequence belongs to the universal ribosomal protein uS3 family. In terms of assembly, part of the 30S ribosomal subunit. Forms a tight complex with proteins S10 and S14.

Binds the lower part of the 30S subunit head. Binds mRNA in the 70S ribosome, positioning it for translation. The sequence is that of Small ribosomal subunit protein uS3 from Alkaliphilus oremlandii (strain OhILAs) (Clostridium oremlandii (strain OhILAs)).